Here is a 116-residue protein sequence, read N- to C-terminus: Aspartate 1-decarboxylase (116 aa).

Catalysis depends on serine 25, which acts as the Schiff-base intermediate with substrate; via pyruvic acid. Position 25 is a pyruvic acid (Ser) (serine 25). Position 57 (threonine 57) interacts with substrate. Tyrosine 58 functions as the Proton donor in the catalytic mechanism. 73–75 is a binding site for substrate; it reads GAA.

It belongs to the PanD family. Heterooctamer of four alpha and four beta subunits. Pyruvate is required as a cofactor. Is synthesized initially as an inactive proenzyme, which is activated by self-cleavage at a specific serine bond to produce a beta-subunit with a hydroxyl group at its C-terminus and an alpha-subunit with a pyruvoyl group at its N-terminus.

The protein resides in the cytoplasm. It catalyses the reaction L-aspartate + H(+) = beta-alanine + CO2. The protein operates within cofactor biosynthesis; (R)-pantothenate biosynthesis; beta-alanine from L-aspartate: step 1/1. Functionally, catalyzes the pyruvoyl-dependent decarboxylation of aspartate to produce beta-alanine. This is Aspartate 1-decarboxylase from Christiangramia forsetii (strain DSM 17595 / CGMCC 1.15422 / KT0803) (Gramella forsetii).